Consider the following 254-residue polypeptide: Imidazole glycerol phosphate synthase subunit HisF (254 aa).

Catalysis depends on residues Asp12 and Asp131.

The protein belongs to the HisA/HisF family. In terms of assembly, heterodimer of HisH and HisF.

It localises to the cytoplasm. The catalysed reaction is 5-[(5-phospho-1-deoxy-D-ribulos-1-ylimino)methylamino]-1-(5-phospho-beta-D-ribosyl)imidazole-4-carboxamide + L-glutamine = D-erythro-1-(imidazol-4-yl)glycerol 3-phosphate + 5-amino-1-(5-phospho-beta-D-ribosyl)imidazole-4-carboxamide + L-glutamate + H(+). It participates in amino-acid biosynthesis; L-histidine biosynthesis; L-histidine from 5-phospho-alpha-D-ribose 1-diphosphate: step 5/9. IGPS catalyzes the conversion of PRFAR and glutamine to IGP, AICAR and glutamate. The HisF subunit catalyzes the cyclization activity that produces IGP and AICAR from PRFAR using the ammonia provided by the HisH subunit. This chain is Imidazole glycerol phosphate synthase subunit HisF, found in Frankia casuarinae (strain DSM 45818 / CECT 9043 / HFP020203 / CcI3).